The sequence spans 211 residues: Large ribosomal subunit protein uL4 (211 aa).

Polar residues predominate over residues 41-52 (QTNARQGTASTK). A disordered region spans residues 41–78 (QTNARQGTASTKTRAEVRGGGRKPWRQKGTGRARAGSI). Residues 60 to 71 (GGRKPWRQKGTG) show a composition bias toward basic residues.

Belongs to the universal ribosomal protein uL4 family. As to quaternary structure, part of the 50S ribosomal subunit.

Its function is as follows. One of the primary rRNA binding proteins, this protein initially binds near the 5'-end of the 23S rRNA. It is important during the early stages of 50S assembly. It makes multiple contacts with different domains of the 23S rRNA in the assembled 50S subunit and ribosome. Functionally, forms part of the polypeptide exit tunnel. In Rippkaea orientalis (strain PCC 8801 / RF-1) (Cyanothece sp. (strain PCC 8801)), this protein is Large ribosomal subunit protein uL4.